A 333-amino-acid chain; its full sequence is Protoheme IX farnesyltransferase (333 aa).

The span at 1 to 13 (MVSSTSQIISTSP) shows a compositional bias: low complexity. The tract at residues 1–21 (MVSSTSQIISTSPSRDDVVPS) is disordered. Helical transmembrane passes span 38–58 (LIPL…GWPL), 63–83 (LACT…LNCL), 109–129 (AVFT…VSGV), 132–152 (LAAG…TAFL), 160–180 (IVIG…AATG), 188–208 (WLFA…AILL), 245–265 (CFGV…LVPF), and 286–306 (AKGL…LLVV).

It belongs to the UbiA prenyltransferase family. Protoheme IX farnesyltransferase subfamily.

It is found in the cell inner membrane. It catalyses the reaction heme b + (2E,6E)-farnesyl diphosphate + H2O = Fe(II)-heme o + diphosphate. It participates in porphyrin-containing compound metabolism; heme O biosynthesis; heme O from protoheme: step 1/1. Its function is as follows. Converts heme B (protoheme IX) to heme O by substitution of the vinyl group on carbon 2 of heme B porphyrin ring with a hydroxyethyl farnesyl side group. The protein is Protoheme IX farnesyltransferase of Prochlorococcus marinus (strain SARG / CCMP1375 / SS120).